A 172-amino-acid polypeptide reads, in one-letter code: Ribosome maturation factor RimM (172 aa).

The region spanning 95 to 168 (AEGEFYYHQI…RVDVEIMEGL (74 aa)) is the PRC barrel domain.

This sequence belongs to the RimM family. In terms of assembly, binds ribosomal protein uS19.

Its subcellular location is the cytoplasm. In terms of biological role, an accessory protein needed during the final step in the assembly of 30S ribosomal subunit, possibly for assembly of the head region. Essential for efficient processing of 16S rRNA. May be needed both before and after RbfA during the maturation of 16S rRNA. It has affinity for free ribosomal 30S subunits but not for 70S ribosomes. This chain is Ribosome maturation factor RimM, found in Streptococcus equi subsp. equi (strain 4047).